The primary structure comprises 377 residues: Nitric oxide reductase FlRd-NAD(+) reductase (377 aa).

The protein belongs to the FAD-dependent oxidoreductase family. Requires FAD as cofactor.

The protein localises to the cytoplasm. The enzyme catalyses 2 reduced [nitric oxide reductase rubredoxin domain] + NAD(+) + H(+) = 2 oxidized [nitric oxide reductase rubredoxin domain] + NADH. Its pathway is nitrogen metabolism; nitric oxide reduction. One of at least two accessory proteins for anaerobic nitric oxide (NO) reductase. Reduces the rubredoxin moiety of NO reductase. The sequence is that of Nitric oxide reductase FlRd-NAD(+) reductase from Escherichia coli O127:H6 (strain E2348/69 / EPEC).